A 293-amino-acid chain; its full sequence is Polyamine aminopropyltransferase (293 aa).

Positions 10 to 244 (HIWFTEYHNN…GFWSFTLASK (235 aa)) constitute a PABS domain. Glutamine 39 provides a ligand contact to S-methyl-5'-thioadenosine. Spermidine is bound by residues histidine 70 and aspartate 94. Residues glutamate 114 and 145-146 (DG) each bind S-methyl-5'-thioadenosine. The active-site Proton acceptor is aspartate 163. 163-166 (DCPD) is a binding site for spermidine. Proline 170 is a binding site for S-methyl-5'-thioadenosine.

It belongs to the spermidine/spermine synthase family. In terms of assembly, homodimer or homotetramer.

It localises to the cytoplasm. The enzyme catalyses S-adenosyl 3-(methylsulfanyl)propylamine + putrescine = S-methyl-5'-thioadenosine + spermidine + H(+). It participates in amine and polyamine biosynthesis; spermidine biosynthesis; spermidine from putrescine: step 1/1. Catalyzes the irreversible transfer of a propylamine group from the amino donor S-adenosylmethioninamine (decarboxy-AdoMet) to putrescine (1,4-diaminobutane) to yield spermidine. This Methanocaldococcus jannaschii (strain ATCC 43067 / DSM 2661 / JAL-1 / JCM 10045 / NBRC 100440) (Methanococcus jannaschii) protein is Polyamine aminopropyltransferase.